Here is a 465-residue protein sequence, read N- to C-terminus: Cysteine--tRNA ligase (465 aa).

Residue cysteine 27 coordinates Zn(2+). A 'HIGH' region motif is present at residues 29-39; that stretch reads PTTYNYIHIGN. Zn(2+) is bound by residues cysteine 207, histidine 232, and glutamate 236. The 'KMSKS' region motif lies at 264-268; that stretch reads KMSKS. Lysine 267 serves as a coordination point for ATP.

The protein belongs to the class-I aminoacyl-tRNA synthetase family. In terms of assembly, monomer. Zn(2+) is required as a cofactor.

The protein resides in the cytoplasm. The catalysed reaction is tRNA(Cys) + L-cysteine + ATP = L-cysteinyl-tRNA(Cys) + AMP + diphosphate. This is Cysteine--tRNA ligase from Carboxydothermus hydrogenoformans (strain ATCC BAA-161 / DSM 6008 / Z-2901).